Reading from the N-terminus, the 179-residue chain is Large ribosomal subunit protein uL5 (179 aa).

It belongs to the universal ribosomal protein uL5 family. As to quaternary structure, part of the 50S ribosomal subunit; part of the 5S rRNA/L5/L18/L25 subcomplex. Contacts the 5S rRNA and the P site tRNA. Forms a bridge to the 30S subunit in the 70S ribosome.

Its function is as follows. This is one of the proteins that bind and probably mediate the attachment of the 5S RNA into the large ribosomal subunit, where it forms part of the central protuberance. In the 70S ribosome it contacts protein S13 of the 30S subunit (bridge B1b), connecting the 2 subunits; this bridge is implicated in subunit movement. Contacts the P site tRNA; the 5S rRNA and some of its associated proteins might help stabilize positioning of ribosome-bound tRNAs. In Nitratidesulfovibrio vulgaris (strain ATCC 29579 / DSM 644 / CCUG 34227 / NCIMB 8303 / VKM B-1760 / Hildenborough) (Desulfovibrio vulgaris), this protein is Large ribosomal subunit protein uL5.